The chain runs to 436 residues: 3-ketoacyl-CoA thiolase (436 aa).

C99 functions as the Acyl-thioester intermediate in the catalytic mechanism. Residues H392 and C422 each act as proton acceptor in the active site.

It belongs to the thiolase-like superfamily. Thiolase family. Heterotetramer of two alpha chains (FadJ) and two beta chains (FadI).

It is found in the cytoplasm. The catalysed reaction is an acyl-CoA + acetyl-CoA = a 3-oxoacyl-CoA + CoA. The protein operates within lipid metabolism; fatty acid beta-oxidation. Functionally, catalyzes the final step of fatty acid oxidation in which acetyl-CoA is released and the CoA ester of a fatty acid two carbons shorter is formed. The chain is 3-ketoacyl-CoA thiolase from Yersinia enterocolitica serotype O:8 / biotype 1B (strain NCTC 13174 / 8081).